The sequence spans 382 residues: Dual-specificity RNA methyltransferase RlmN (382 aa).

Glu96 acts as the Proton acceptor in catalysis. The region spanning 102–342 (QGKRGTLCVS…VRTTRGEDID (241 aa)) is the Radical SAM core domain. A disulfide bridge connects residues Cys109 and Cys345. [4Fe-4S] cluster is bound by residues Cys116, Cys120, and Cys123. Residues 170–171 (GE), Ser202, 224–226 (SLH), and Asn302 contribute to the S-adenosyl-L-methionine site. Cys345 functions as the S-methylcysteine intermediate in the catalytic mechanism.

It belongs to the radical SAM superfamily. RlmN family. Requires [4Fe-4S] cluster as cofactor.

It localises to the cytoplasm. It catalyses the reaction adenosine(2503) in 23S rRNA + 2 reduced [2Fe-2S]-[ferredoxin] + 2 S-adenosyl-L-methionine = 2-methyladenosine(2503) in 23S rRNA + 5'-deoxyadenosine + L-methionine + 2 oxidized [2Fe-2S]-[ferredoxin] + S-adenosyl-L-homocysteine. The catalysed reaction is adenosine(37) in tRNA + 2 reduced [2Fe-2S]-[ferredoxin] + 2 S-adenosyl-L-methionine = 2-methyladenosine(37) in tRNA + 5'-deoxyadenosine + L-methionine + 2 oxidized [2Fe-2S]-[ferredoxin] + S-adenosyl-L-homocysteine. Specifically methylates position 2 of adenine 2503 in 23S rRNA and position 2 of adenine 37 in tRNAs. m2A2503 modification seems to play a crucial role in the proofreading step occurring at the peptidyl transferase center and thus would serve to optimize ribosomal fidelity. In Pseudomonas fluorescens (strain ATCC BAA-477 / NRRL B-23932 / Pf-5), this protein is Dual-specificity RNA methyltransferase RlmN.